The primary structure comprises 111 residues: Macrodomain Ori protein (111 aa).

It belongs to the MaoP family.

Functionally, involved in the organization of the Ori region of the chromosome into a macrodomain (MD). It constrains DNA mobility in the Ori macrodomain and limits long-distance DNA interactions with other chromosomal regions. In Haemophilus influenzae (strain ATCC 51907 / DSM 11121 / KW20 / Rd), this protein is Macrodomain Ori protein.